Reading from the N-terminus, the 337-residue chain is Glycerol-3-phosphate dehydrogenase [NAD(P)+] 2 (337 aa).

T11, W12, and K105 together coordinate NADPH. The sn-glycerol 3-phosphate site is built by K105, G139, and T141. Residue A143 coordinates NADPH. Residues K194, D247, S257, R258, and N259 each coordinate sn-glycerol 3-phosphate. The Proton acceptor role is filled by K194. An NADPH-binding site is contributed by R258. Positions 282 and 284 each coordinate NADPH.

It belongs to the NAD-dependent glycerol-3-phosphate dehydrogenase family.

It is found in the cytoplasm. It carries out the reaction sn-glycerol 3-phosphate + NAD(+) = dihydroxyacetone phosphate + NADH + H(+). The catalysed reaction is sn-glycerol 3-phosphate + NADP(+) = dihydroxyacetone phosphate + NADPH + H(+). The protein operates within membrane lipid metabolism; glycerophospholipid metabolism. Catalyzes the reduction of the glycolytic intermediate dihydroxyacetone phosphate (DHAP) to sn-glycerol 3-phosphate (G3P), the key precursor for phospholipid synthesis. This is Glycerol-3-phosphate dehydrogenase [NAD(P)+] 2 from Lactobacillus delbrueckii subsp. bulgaricus (strain ATCC 11842 / DSM 20081 / BCRC 10696 / JCM 1002 / NBRC 13953 / NCIMB 11778 / NCTC 12712 / WDCM 00102 / Lb 14).